Here is a 398-residue protein sequence, read N- to C-terminus: 1-deoxy-D-xylulose 5-phosphate reductoisomerase (398 aa).

Residues threonine 10, glycine 11, serine 12, isoleucine 13, asparagine 38, and asparagine 124 each contribute to the NADPH site. A 1-deoxy-D-xylulose 5-phosphate-binding site is contributed by lysine 125. Glutamate 126 is a binding site for NADPH. Aspartate 150 provides a ligand contact to Mn(2+). Serine 151, glutamate 152, serine 176, and histidine 199 together coordinate 1-deoxy-D-xylulose 5-phosphate. Glutamate 152 contacts Mn(2+). Glycine 205 is an NADPH binding site. 1-deoxy-D-xylulose 5-phosphate-binding residues include serine 212, asparagine 217, lysine 218, and glutamate 221. A Mn(2+)-binding site is contributed by glutamate 221.

It belongs to the DXR family. It depends on Mg(2+) as a cofactor. The cofactor is Mn(2+).

The catalysed reaction is 2-C-methyl-D-erythritol 4-phosphate + NADP(+) = 1-deoxy-D-xylulose 5-phosphate + NADPH + H(+). Its pathway is isoprenoid biosynthesis; isopentenyl diphosphate biosynthesis via DXP pathway; isopentenyl diphosphate from 1-deoxy-D-xylulose 5-phosphate: step 1/6. Functionally, catalyzes the NADPH-dependent rearrangement and reduction of 1-deoxy-D-xylulose-5-phosphate (DXP) to 2-C-methyl-D-erythritol 4-phosphate (MEP). The chain is 1-deoxy-D-xylulose 5-phosphate reductoisomerase from Rippkaea orientalis (strain PCC 8801 / RF-1) (Cyanothece sp. (strain PCC 8801)).